The sequence spans 545 residues: Adenine deaminase (545 aa).

This sequence belongs to the metallo-dependent hydrolases superfamily. Adenine deaminase family. It depends on Mn(2+) as a cofactor.

The catalysed reaction is adenine + H2O + H(+) = hypoxanthine + NH4(+). In Salinibacter ruber (strain DSM 13855 / M31), this protein is Adenine deaminase.